The primary structure comprises 444 residues: Probable D-serine dehydratase (444 aa).

K118 carries the N6-(pyridoxal phosphate)lysine modification.

It belongs to the serine/threonine dehydratase family. DsdA subfamily. Pyridoxal 5'-phosphate serves as cofactor.

It carries out the reaction D-serine = pyruvate + NH4(+). This Desulfitobacterium hafniense (strain Y51) protein is Probable D-serine dehydratase.